The sequence spans 379 residues: tRNA-specific 2-thiouridylase MnmA (379 aa).

ATP is bound by residues 9-16 and Met35; that span reads AMSGGVDS. An interaction with target base in tRNA region spans residues 94–96; that stretch reads NPD. Cys99 acts as the Nucleophile in catalysis. Residues Cys99 and Cys195 are joined by a disulfide bond. ATP is bound at residue Gly123. The interval 145-147 is interaction with tRNA; the sequence is KDQ. The Cysteine persulfide intermediate role is filled by Cys195. The segment at 307–308 is interaction with tRNA; the sequence is RY.

This sequence belongs to the MnmA/TRMU family.

It is found in the cytoplasm. The enzyme catalyses S-sulfanyl-L-cysteinyl-[protein] + uridine(34) in tRNA + AH2 + ATP = 2-thiouridine(34) in tRNA + L-cysteinyl-[protein] + A + AMP + diphosphate + H(+). Catalyzes the 2-thiolation of uridine at the wobble position (U34) of tRNA, leading to the formation of s(2)U34. The sequence is that of tRNA-specific 2-thiouridylase MnmA from Xylella fastidiosa (strain 9a5c).